Consider the following 102-residue polypeptide: MKKVLGLVVAAAMGLSSAAFAAETATTPAPTATTTKAAPAKTTHHKKQHKAAPAQKAQAAKKHHKNTKAEQKAPEQKAQAAKKHAGKHSHQQPAKPAAQPAA.

A signal peptide spans 1 to 21 (MKKVLGLVVAAAMGLSSAAFA). Positions 22–41 (AETATTPAPTATTTKAAPAK) are enriched in low complexity. Positions 22-58 (AETATTPAPTATTTKAAPAKTTHHKKQHKAAPAQKAQ) are excised as a propeptide. The segment at 22–102 (AETATTPAPT…PAKPAAQPAA (81 aa)) is disordered. The segment covering 80–90 (AAKKHAGKHSH) has biased composition (basic residues). The segment covering 91–102 (QQPAKPAAQPAA) has biased composition (low complexity).

This sequence belongs to the Asr family. In terms of processing, proteolytic processing gives rise to the active protein.

The protein localises to the periplasm. Its function is as follows. Required for growth and/or survival at acidic conditions. The chain is Acid shock protein from Escherichia coli (strain SE11).